The sequence spans 428 residues: D-amino acid dehydrogenase (428 aa).

An FAD-binding site is contributed by 3 to 17; that stretch reads VVVLGSGVVGVTSAY.

The protein belongs to the DadA oxidoreductase family. It depends on FAD as a cofactor.

It catalyses the reaction a D-alpha-amino acid + A + H2O = a 2-oxocarboxylate + AH2 + NH4(+). Its pathway is amino-acid degradation; D-alanine degradation; NH(3) and pyruvate from D-alanine: step 1/1. Its function is as follows. Oxidative deamination of D-amino acids. The polypeptide is D-amino acid dehydrogenase (Paraburkholderia phymatum (strain DSM 17167 / CIP 108236 / LMG 21445 / STM815) (Burkholderia phymatum)).